A 627-amino-acid polypeptide reads, in one-letter code: Membrane protein insertase YidC (627 aa).

The chain crosses the membrane as a helical span at residues 8–28 (LFLALILSMGIWMGVNYFFFP). Residues 33-57 (KKNTETKQTQSDKTSENTKQQITSG) show a composition bias toward polar residues. The interval 33–68 (KKNTETKQTQSDKTSENTKQQITSGKTKESNSADPV) is disordered. The span at 58-68 (KTKESNSADPV) shows a compositional bias: basic and acidic residues. Helical transmembrane passes span 417-437 (FTIP…KLVF), 488-508 (VGGC…YTAF), 536-556 (AIPY…LMVG), and 575-595 (MLMY…PSGV).

Belongs to the OXA1/ALB3/YidC family. Type 1 subfamily. In terms of assembly, interacts with the Sec translocase complex via SecD. Specifically interacts with transmembrane segments of nascent integral membrane proteins during membrane integration.

It localises to the cell inner membrane. Its function is as follows. Required for the insertion and/or proper folding and/or complex formation of integral membrane proteins into the membrane. Involved in integration of membrane proteins that insert both dependently and independently of the Sec translocase complex, as well as at least some lipoproteins. Aids folding of multispanning membrane proteins. This chain is Membrane protein insertase YidC, found in Leptospira interrogans serogroup Icterohaemorrhagiae serovar copenhageni (strain Fiocruz L1-130).